The following is a 3828-amino-acid chain: Histone-lysine N-methyltransferase trithorax (3828 aa).

3 disordered regions span residues 25–179 (EDEA…AAAA), 356–390 (AVKS…ATKQ), and 512–589 (FRKQ…RSTR). Residues 29–57 (ASAAAAAAAATAATTEQHQQSEQSAGSSA) show a composition bias toward low complexity. The segment covering 77-89 (AATSGNRGASSGA) has biased composition (polar residues). Residues 101–114 (GNGSSTGSKTTNGG) show a composition bias toward low complexity. A compositionally biased stretch (acidic residues) spans 152–165 (DGTEDTNNDDDDDS). Residues 359–387 (SSGSSPNPNHNPNAVAGSTSAAAPGAPTA) show a composition bias toward low complexity. The span at 513–523 (RKQEPQHKTPE) shows a compositional bias: basic and acidic residues. Residues 524-553 (DNDDDGSASSDAIEDDEDIDDDDAEENEEA) show a composition bias toward acidic residues. A compositionally biased stretch (basic and acidic residues) spans 554–581 (ASEKSAETTASVDEKEADDRQLVMDKHF). The nuclear receptor DNA-binding region spans 725–839 (ASTCAVCSAP…AGHRSRLSAI (115 aa)). 3 disordered regions span residues 933 to 1036 (ESKE…SAVP), 1075 to 1094 (ELAA…TTSP), and 1131 to 1170 (AQPA…TTRN). Positions 960-974 (AKQDKEKARELEAEK) are enriched in basic and acidic residues. 2 stretches are compositionally biased toward low complexity: residues 998–1022 (ASTT…TNSS) and 1078–1094 (AAEA…TTSP). Over residues 1140–1170 (ESRSSKSNTQTEAKKTPATSGSSKGKVTTRN) the composition is skewed to polar residues. 3 PHD-type zinc fingers span residues 1251 to 1334 (RALC…CTVC), 1335 to 1380 (YTCN…CLKC), and 1408 to 1469 (GNFC…CARR). Positions 1483–1644 (AVMEEFKSSL…SEQFPWFQNE (162 aa)) constitute a Bromo domain. The C2HC pre-PHD-type zinc finger occupies 1708–1748 (TRVCLFCRKSGEGLSGEEARLLYCGHDCWVHINCAMWSAEV). Residues 1769 to 1816 (IKCTVCGNRGATVGCNVKSCGEHYHYPCARTIDCAFLTDKSMYCPAHA) form a PHD-type 4 zinc finger. The 58-residue stretch at 1856 to 1913 (KVQFHIGSVAVRQLGSIVPRFSDSFEAIVPINFLCSRLYWSSKEPWKIVEYTVRTTIQ) folds into the FYR N-terminal domain. Disordered stretches follow at residues 2252 to 2272 (CEPM…AQLS), 2464 to 2510 (AHQK…QQQQ), 2826 to 2848 (RNTN…PQQS), 2897 to 2973 (RQQQ…SPAA), 2988 to 3031 (APAP…QLSM), 3117 to 3178 (ASAN…VPAG), 3314 to 3338 (NGSG…DDDD), and 3457 to 3487 (KLDV…PMRD). 3 stretches are compositionally biased toward low complexity: residues 2253–2268 (EPMS…ATGT), 2483–2510 (QGQQ…QQQQ), and 2836–2848 (SVLS…PQQS). Residues 2897 to 2917 (RQQQANELKNKQAAGQQTGST) are compositionally biased toward polar residues. 4 stretches are compositionally biased toward low complexity: residues 2956 to 2973 (ATSA…SPAA), 2988 to 2997 (APAPQPQQQE), 3005 to 3031 (LHQQ…QLSM), and 3117 to 3132 (ASAN…QQNS). The segment covering 3148-3164 (QQRQEPTPLSNDVVVQS) has biased composition (polar residues). Residues 3328 to 3338 (DDAEEDEDDDD) are compositionally biased toward acidic residues. The FYR C-terminal domain maps to 3493-3577 (GPHLLYEIQS…EKCVKYTPKY (85 aa)). In terms of domain architecture, SET spans 3690-3806 (DYVGVFRSHI…QGEELTYDYK (117 aa)). Residues histidine 3700, arginine 3702, tyrosine 3744, and 3767-3768 (NH) each bind S-adenosyl-L-methionine. 4 residues coordinate Zn(2+): cysteine 3770, cysteine 3816, cysteine 3818, and cysteine 3823. A Post-SET domain is found at 3812-3828 (EKIPCSCGSKRCRKYLN).

The protein belongs to the class V-like SAM-binding methyltransferase superfamily. Histone-lysine methyltransferase family. TRX/MLL subfamily. In terms of assembly, interacts with ash1 via its SET domain.

The protein resides in the nucleus. The enzyme catalyses L-lysyl(9)-[histone H3] + 3 S-adenosyl-L-methionine = N(6),N(6),N(6)-trimethyl-L-lysyl(9)-[histone H3] + 3 S-adenosyl-L-homocysteine + 3 H(+). In terms of biological role, histone methyltransferase that methylates 'Lys-4' of histone H3 (H3K4me). H3K4me represents a specific tag for epigenetic transcriptional activation. Functions in segment determination through interaction with genes of bithorax (BX-C) and antennapedia (ANT-C) complexes. Acts as an activator of BX-C. Involved in the very early regulation of homeotic genes expressed only in the posterior region of the embryo. This is Histone-lysine N-methyltransferase trithorax (trx) from Drosophila virilis (Fruit fly).